A 263-amino-acid chain; its full sequence is Hydroxyethylthiazole kinase (263 aa).

Met41 is a binding site for substrate. ATP-binding residues include Arg117 and Ser163. Ala190 provides a ligand contact to substrate.

It belongs to the Thz kinase family. Mg(2+) is required as a cofactor.

It carries out the reaction 5-(2-hydroxyethyl)-4-methylthiazole + ATP = 4-methyl-5-(2-phosphooxyethyl)-thiazole + ADP + H(+). Its pathway is cofactor biosynthesis; thiamine diphosphate biosynthesis; 4-methyl-5-(2-phosphoethyl)-thiazole from 5-(2-hydroxyethyl)-4-methylthiazole: step 1/1. In terms of biological role, catalyzes the phosphorylation of the hydroxyl group of 4-methyl-5-beta-hydroxyethylthiazole (THZ). This Haemophilus influenzae (strain PittEE) protein is Hydroxyethylthiazole kinase.